The chain runs to 637 residues: Threonine--tRNA ligase (637 aa).

The 61-residue stretch at 1–61 folds into the TGS domain; sequence MITITLPDSS…ATDAAVRLIT (61 aa). A catalytic region spans residues 238–528; the sequence is DHRKLGAELD…LIEHFAGKFP (291 aa). 3 residues coordinate Zn(2+): C329, H380, and H505.

Belongs to the class-II aminoacyl-tRNA synthetase family. As to quaternary structure, homodimer. Zn(2+) is required as a cofactor.

Its subcellular location is the cytoplasm. The enzyme catalyses tRNA(Thr) + L-threonine + ATP = L-threonyl-tRNA(Thr) + AMP + diphosphate + H(+). Catalyzes the attachment of threonine to tRNA(Thr) in a two-step reaction: L-threonine is first activated by ATP to form Thr-AMP and then transferred to the acceptor end of tRNA(Thr). Also edits incorrectly charged L-seryl-tRNA(Thr). This is Threonine--tRNA ligase from Desulfosudis oleivorans (strain DSM 6200 / JCM 39069 / Hxd3) (Desulfococcus oleovorans).